A 672-amino-acid polypeptide reads, in one-letter code: Beta-galactosidase bgaB (672 aa).

Residue Arg-109 participates in substrate binding. Cys-113 is a binding site for Zn(2+). Asn-147 lines the substrate pocket. The Proton donor role is filled by Glu-148. Zn(2+) contacts are provided by Cys-156, Cys-158, and Cys-161. Glu-303 acts as the Nucleophile in catalysis. Residues Trp-311 and 351–354 contribute to the substrate site; that span reads EKFH.

Belongs to the glycosyl hydrolase 42 family.

It carries out the reaction Hydrolysis of terminal non-reducing beta-D-galactose residues in beta-D-galactosides.. By divalent metal ions. Fe(2+), Zn(2+), Cu(2+), Pb(2+) and Sn(2+) inhibit 52, 76.6, 85.3, 100 and 100% of the enzyme activity, respectively. Other metal cations and EDTA do not inhibit this enzyme. Thiol reagents 2-mercaptoethanol and dithiothreitol have no effect on the activity. Sulfhydryl group-blocking reagents p-chloromercuribenzoic acid and iodoacetic acid inhibit 86.2 and 74% of the enzyme activity, respectively. Functionally, hydrolyzes 6-bromo-2-naphthyl-beta-D-galactopyranoside and o-nitrophenyl-beta-D-galactopyranoside (ONPG). Possesses a high level of transgalactosylation activity. Hydrolyzes lactose in milk. The sequence is that of Beta-galactosidase bgaB (bgaB) from Geobacillus kaustophilus.